Reading from the N-terminus, the 1097-residue chain is UPF0746 protein DDB_G0281095 (1097 aa).

Residues 1-11 (MVNNNKRKEIE) show a composition bias toward basic and acidic residues. Positions 1 to 24 (MVNNNKRKEIENQENDNDDDNDGL) are disordered. Residues 12–22 (NQENDNDDDND) are compositionally biased toward acidic residues. In terms of domain architecture, SAP spans 35–69 (YDSIRSKELQTIAKSLGLPNNGKKQEVYKRIEGYF). Residues 329 to 521 (FKEIREIHQQ…QLILELNEIQ (193 aa)) are a coiled coil.

The protein belongs to the UPF0746 family.

The chain is UPF0746 protein DDB_G0281095 from Dictyostelium discoideum (Social amoeba).